The primary structure comprises 470 residues: Putative F-box/LRR-repeat protein At3g58920 (470 aa).

The region spanning 1–53 is the F-box domain; it reads MDRISNLPNEIICHIVSFLSAKEAAFASVLSKRWQNLFTIVQKLEFDDSVKNQ. LRR repeat units lie at residues 114–142, 143–170, 173–198, 225–250, 287–312, and 342–367; these read KLEI…KLTS, CIFA…FLKS, FSDL…TIYD, FTYF…KYID, EDDP…HLST, and YECF…MIKG.

The chain is Putative F-box/LRR-repeat protein At3g58920 from Arabidopsis thaliana (Mouse-ear cress).